The chain runs to 118 residues: MARIAGVNLAIQKHVWIGLQSIYGIGRTRSRKVCDAANVAIYTKIRDLSEPEIERLRVEVGKYVIEGDLRREVGMAIKRLMDLNCYRGLRHRRCLPLRGQRTRTNARTRKGPRKAIKK.

The disordered stretch occupies residues 99–118 (GQRTRTNARTRKGPRKAIKK).

It belongs to the universal ribosomal protein uS13 family. Part of the 30S ribosomal subunit. Forms a loose heterodimer with protein S19. Forms two bridges to the 50S subunit in the 70S ribosome.

In terms of biological role, located at the top of the head of the 30S subunit, it contacts several helices of the 16S rRNA. In the 70S ribosome it contacts the 23S rRNA (bridge B1a) and protein L5 of the 50S subunit (bridge B1b), connecting the 2 subunits; these bridges are implicated in subunit movement. Contacts the tRNAs in the A and P-sites. The chain is Small ribosomal subunit protein uS13 from Xylella fastidiosa (strain M12).